The chain runs to 437 residues: Pterin deaminase (437 aa).

A divalent metal cation-binding residues include H80 and H82. K85 provides a ligand contact to substrate. H231 provides a ligand contact to a divalent metal cation. E234 acts as the Proton donor in catalysis. Residue D331 participates in a divalent metal cation binding. Residue 331–332 participates in substrate binding; it reads DN.

It belongs to the metallo-dependent hydrolases superfamily. Pterin deaminase family. It depends on a divalent metal cation as a cofactor.

It carries out the reaction a 2-amino-4-hydroxypteridine + H2O + H(+) = a 2,4-dihydroxypteridine + NH4(+). It catalyses the reaction L-sepiapterin + H2O + H(+) = (S)-xanthopterin-B2 + NH4(+). In terms of biological role, catalyzes the deamination of many pterin metabolites, such as formylpterin, pterin-6-carboxylate, pterin-7-carboxylate, pterin, hydroxymethylpterin, biopterin, D-(+)-neopterin, isoxanthopterin, sepiapterin, folate, xanthopterin, and 7,8-dihydrohydroxymethylpterin. May be involved in a degradative pathway for catabolizing pterin rings. The sequence is that of Pterin deaminase from Rhizobium rhizogenes (strain K84 / ATCC BAA-868) (Agrobacterium radiobacter).